A 404-amino-acid chain; its full sequence is Probable tRNA sulfurtransferase (404 aa).

A THUMP domain is found at 60 to 165 (QPIVEALKLV…DEAAYISYEE (106 aa)). Residues 183–184 (ML), 208–209 (HF), arginine 265, glycine 287, and glutamine 296 contribute to the ATP site.

This sequence belongs to the ThiI family.

It is found in the cytoplasm. It carries out the reaction [ThiI sulfur-carrier protein]-S-sulfanyl-L-cysteine + a uridine in tRNA + 2 reduced [2Fe-2S]-[ferredoxin] + ATP + H(+) = [ThiI sulfur-carrier protein]-L-cysteine + a 4-thiouridine in tRNA + 2 oxidized [2Fe-2S]-[ferredoxin] + AMP + diphosphate. It catalyses the reaction [ThiS sulfur-carrier protein]-C-terminal Gly-Gly-AMP + S-sulfanyl-L-cysteinyl-[cysteine desulfurase] + AH2 = [ThiS sulfur-carrier protein]-C-terminal-Gly-aminoethanethioate + L-cysteinyl-[cysteine desulfurase] + A + AMP + 2 H(+). It functions in the pathway cofactor biosynthesis; thiamine diphosphate biosynthesis. Functionally, catalyzes the ATP-dependent transfer of a sulfur to tRNA to produce 4-thiouridine in position 8 of tRNAs, which functions as a near-UV photosensor. Also catalyzes the transfer of sulfur to the sulfur carrier protein ThiS, forming ThiS-thiocarboxylate. This is a step in the synthesis of thiazole, in the thiamine biosynthesis pathway. The sulfur is donated as persulfide by IscS. This is Probable tRNA sulfurtransferase from Streptococcus pyogenes serotype M49 (strain NZ131).